The primary structure comprises 115 residues: Dolichyl-diphosphooligosaccharide--protein glycosyltransferase subunit DAD1 (115 aa).

Residues 1–31 (MVKSTSKDAQDLFRSLRSAYSATPTNLKIID) lie on the Cytoplasmic side of the membrane. A helical transmembrane segment spans residues 32-52 (LYVVFAVFTALIQVVYMALVG). The Lumenal segment spans residues 53 to 55 (SFP). The helical transmembrane segment at 56 to 76 (FNSFLSGVLSCIGTAVLAVCL) threads the bilayer. Over 77 to 94 (RIQVNKENKEFKDLAPER) the chain is Cytoplasmic. Residues 95-115 (AFADFVLCNLVLHLVIINFLG) traverse the membrane as a helical segment.

The protein belongs to the DAD/OST2 family. As to quaternary structure, component of the oligosaccharyltransferase (OST) complex. As to expression, ubiquitous.

The protein localises to the endoplasmic reticulum membrane. It participates in protein modification; protein glycosylation. Functionally, subunit of the oligosaccharyl transferase (OST) complex that catalyzes the initial transfer of a defined glycan (Glc(3)Man(9)GlcNAc(2) in eukaryotes) from the lipid carrier dolichol-pyrophosphate to an asparagine residue within an Asn-X-Ser/Thr consensus motif in nascent polypeptide chains, the first step in protein N-glycosylation. N-glycosylation occurs cotranslationally and the complex associates with the Sec61 complex at the channel-forming translocon complex that mediates protein translocation across the endoplasmic reticulum (ER). All subunits are required for a maximal enzyme activity. This Arabidopsis thaliana (Mouse-ear cress) protein is Dolichyl-diphosphooligosaccharide--protein glycosyltransferase subunit DAD1 (DAD1).